The chain runs to 229 residues: 7-cyano-7-deazaguanine synthase (229 aa).

8-18 contacts ATP; the sequence is CSGGLDSSVIA. Zn(2+) contacts are provided by Cys-190, Cys-203, Cys-206, and Cys-209.

It belongs to the QueC family. The cofactor is Zn(2+).

The enzyme catalyses 7-carboxy-7-deazaguanine + NH4(+) + ATP = 7-cyano-7-deazaguanine + ADP + phosphate + H2O + H(+). It functions in the pathway purine metabolism; 7-cyano-7-deazaguanine biosynthesis. In terms of biological role, catalyzes the ATP-dependent conversion of 7-carboxy-7-deazaguanine (CDG) to 7-cyano-7-deazaguanine (preQ(0)). This chain is 7-cyano-7-deazaguanine synthase, found in Methanopyrus kandleri (strain AV19 / DSM 6324 / JCM 9639 / NBRC 100938).